The following is a 126-amino-acid chain: Glycine cleavage system H protein (126 aa).

The region spanning 21–103 (TATIGISEHA…YEGGWIVKVK (83 aa)) is the Lipoyl-binding domain. An N6-lipoyllysine modification is found at Lys-62.

Belongs to the GcvH family. As to quaternary structure, the glycine cleavage system is composed of four proteins: P, T, L and H. Requires (R)-lipoate as cofactor.

In terms of biological role, the glycine cleavage system catalyzes the degradation of glycine. The H protein shuttles the methylamine group of glycine from the P protein to the T protein. This Vibrio campbellii (strain ATCC BAA-1116) protein is Glycine cleavage system H protein.